A 213-amino-acid polypeptide reads, in one-letter code: 3,4-dihydroxy-2-butanone 4-phosphate synthase (213 aa).

D-ribulose 5-phosphate-binding positions include 37–38 (RE), D42, 150–154 (RPGHT), and E174. Position 38 (E38) interacts with Mg(2+). H153 provides a ligand contact to Mg(2+).

It belongs to the DHBP synthase family. As to quaternary structure, homodimer. Mg(2+) is required as a cofactor. It depends on Mn(2+) as a cofactor.

The enzyme catalyses D-ribulose 5-phosphate = (2S)-2-hydroxy-3-oxobutyl phosphate + formate + H(+). The protein operates within cofactor biosynthesis; riboflavin biosynthesis; 2-hydroxy-3-oxobutyl phosphate from D-ribulose 5-phosphate: step 1/1. In terms of biological role, catalyzes the conversion of D-ribulose 5-phosphate to formate and 3,4-dihydroxy-2-butanone 4-phosphate. In Clostridium botulinum (strain Langeland / NCTC 10281 / Type F), this protein is 3,4-dihydroxy-2-butanone 4-phosphate synthase.